The following is a 291-amino-acid chain: Glycine--tRNA ligase alpha subunit (291 aa).

Belongs to the class-II aminoacyl-tRNA synthetase family. In terms of assembly, tetramer of two alpha and two beta subunits.

It is found in the cytoplasm. It carries out the reaction tRNA(Gly) + glycine + ATP = glycyl-tRNA(Gly) + AMP + diphosphate. The polypeptide is Glycine--tRNA ligase alpha subunit (Geobacter metallireducens (strain ATCC 53774 / DSM 7210 / GS-15)).